A 130-amino-acid polypeptide reads, in one-letter code: Anti-adapter protein IraD (130 aa).

It belongs to the GpW/Gp25 family. IraD subfamily. As to quaternary structure, interacts with RssB.

The protein resides in the cytoplasm. Its function is as follows. Inhibits RpoS proteolysis by regulating RssB activity, thereby increasing the stability of the sigma stress factor RpoS during oxidative stress. Its effect on RpoS stability is due to its interaction with RssB, which probably blocks the interaction of RssB with RpoS, and the consequent delivery of the RssB-RpoS complex to the ClpXP protein degradation pathway. This chain is Anti-adapter protein IraD, found in Escherichia coli O157:H7.